The chain runs to 176 residues: MAARGRRAEPQGREAPGPAGGGGGGSRWAESGSGTSPESGDEEVSGAGSSPVSGGVNLFANDGSFLELFKRKMEEEQRQRQEEPPPGPQRPDQSAAAAGPGDPKRKGGPGSTLSFVGKRRGGNKLALKTGIVAKKQKTEDEVLTSKGDAWAKYMAEVKKYKAHQCGDDDKTRPLVK.

Positions 1–12 (MAARGRRAEPQG) are enriched in basic and acidic residues. Residues 1-121 (MAARGRRAEP…TLSFVGKRRG (121 aa)) form a disordered region. Low complexity predominate over residues 45 to 56 (SGAGSSPVSGGV). The span at 68 to 83 (LFKRKMEEEQRQRQEE) shows a compositional bias: basic and acidic residues. The segment covering 90-101 (RPDQSAAAAGPG) has biased composition (low complexity). K146 is modified (N6-acetyllysine).

Part of the telomerase RNA 3' end complex which contains about 488 proteins.

Its activity is regulated as follows. Zn(2+) inhibits the RNase activity while Mg(2+), Ca(2+), Mn(2+), K(+), Na(+), EDTA and EGTA show little effect on the exoribonuclease activity. Exoribonuclease that is part of the telomerase RNA 3' end processing complex and which has the ability to cleave all four unpaired RNA nucleotides from the 5' end or 3' end with higher efficiency for purine bases. The chain is Telomerase RNA component interacting RNase from Homo sapiens (Human).